Here is a 217-residue protein sequence, read N- to C-terminus: U2 snRNP component ist3 (217 aa).

An RRM domain is found at 31–109; sequence AYIYIGNLDF…RLVRVDHVAS (79 aa). Disordered stretches follow at residues 119-138 and 154-217; these read PANL…STIN and EVEQ…DLDG. Positions 128–138 are enriched in polar residues; the sequence is SGSSLSVSTIN. Phosphoserine is present on S160. Composition is skewed to basic and acidic residues over residues 161 to 176 and 185 to 198; these read PKDE…DYIH and HESS…DSNR. Over residues 199–217 the composition is skewed to basic residues; it reads HSRHHRRHSRSRRHRDLDG.

The protein belongs to the IST3 family. As to quaternary structure, belongs to the 40S cdc5-associated complex (or cwf complex), a spliceosome sub-complex reminiscent of a late-stage spliceosome composed of the U2, U5 and U6 snRNAs and at least brr2, cdc5, cwf2/prp3, cwf3/syf1, cwf4/syf3, cwf5/ecm2, spp42/cwf6, cwf7/spf27, cwf8, cwf9, cwf10, cwf11, cwf12, prp45/cwf13, cwf14, cwf15, cwf16, cwf17, cwf18, cwf19, cwf20, cwf21, cwf22, cwf23, cwf24, cwf25, cwf26, cyp7/cwf27, cwf28, cwf29/ist3, lea1, msl1, prp5/cwf1, prp10, prp12/sap130, prp17, prp22, sap61, sap62, sap114, sap145, slu7, smb1, smd1, smd3, smf1, smg1 and syf2.

It is found in the nucleus. In terms of biological role, required for pre-mRNA splicing and spliceosome assembly. The protein is U2 snRNP component ist3 (cwf29) of Schizosaccharomyces pombe (strain 972 / ATCC 24843) (Fission yeast).